The primary structure comprises 240 residues: Urease accessory protein UreD (240 aa).

It belongs to the UreD family. As to quaternary structure, ureD, UreF and UreG form a complex that acts as a GTP-hydrolysis-dependent molecular chaperone, activating the urease apoprotein by helping to assemble the nickel containing metallocenter of UreC. The UreE protein probably delivers the nickel.

The protein localises to the cytoplasm. Functionally, required for maturation of urease via the functional incorporation of the urease nickel metallocenter. The sequence is that of Urease accessory protein UreD from Granulibacter bethesdensis (strain ATCC BAA-1260 / CGDNIH1).